The primary structure comprises 689 residues: Elongation factor G (689 aa).

Residues 8 to 282 (ENTRNLGIMA…AVVDYLPSPL (275 aa)) form the tr-type G domain. Residues 17–24 (AHIDAGKT), 81–85 (DTPGH), and 135–138 (NKMD) contribute to the GTP site.

The protein belongs to the TRAFAC class translation factor GTPase superfamily. Classic translation factor GTPase family. EF-G/EF-2 subfamily.

The protein resides in the cytoplasm. Its function is as follows. Catalyzes the GTP-dependent ribosomal translocation step during translation elongation. During this step, the ribosome changes from the pre-translocational (PRE) to the post-translocational (POST) state as the newly formed A-site-bound peptidyl-tRNA and P-site-bound deacylated tRNA move to the P and E sites, respectively. Catalyzes the coordinated movement of the two tRNA molecules, the mRNA and conformational changes in the ribosome. This is Elongation factor G from Mesoplasma florum (strain ATCC 33453 / NBRC 100688 / NCTC 11704 / L1) (Acholeplasma florum).